Here is a 195-residue protein sequence, read N- to C-terminus: Inner membrane protein YohC (195 aa).

The Cytoplasmic portion of the chain corresponds to 1–32 (MSHVWGLFSHPDREMQVINRENETISHHYTHH). A helical transmembrane segment spans residues 33–55 (VLLMAAIPVICAFIGTTQIGWNF). Residues 56–64 (GDGTILKLS) are Periplasmic-facing. A helical transmembrane segment spans residues 65-87 (WFTGLALAVLFYGVMLAGVAVMG). The Cytoplasmic portion of the chain corresponds to 88–107 (RVIWWMARNYPQRPSLAHCM). The helical transmembrane segment at 108–130 (VFAGYVATPLFLSGLVALYPLVW) threads the bilayer. Residues 131–134 (LCAL) are Periplasmic-facing. The helical transmembrane segment at 135 to 157 (VGTVALFYTGYLLYLGIPSFLNI) threads the bilayer. The Cytoplasmic portion of the chain corresponds to 158 to 169 (NKEEGLSFSSST). A helical transmembrane segment spans residues 170–192 (LAIGVLVLEVLLALTVILWGYGY). At 193 to 195 (RLF) the chain is on the periplasmic side.

Its subcellular location is the cell inner membrane. This is Inner membrane protein YohC (yohC) from Escherichia coli O6:H1 (strain CFT073 / ATCC 700928 / UPEC).